Reading from the N-terminus, the 226-residue chain is Uracil-DNA glycosylase (226 aa).

The active-site Proton acceptor is aspartate 65.

This sequence belongs to the uracil-DNA glycosylase (UDG) superfamily. UNG family.

It is found in the cytoplasm. It catalyses the reaction Hydrolyzes single-stranded DNA or mismatched double-stranded DNA and polynucleotides, releasing free uracil.. Its function is as follows. Excises uracil residues from the DNA which can arise as a result of misincorporation of dUMP residues by DNA polymerase or due to deamination of cytosine. The sequence is that of Uracil-DNA glycosylase from Bacillus pumilus (strain SAFR-032).